We begin with the raw amino-acid sequence, 141 residues long: Large ribosomal subunit protein uL11 (141 aa).

Belongs to the universal ribosomal protein uL11 family. Part of the ribosomal stalk of the 50S ribosomal subunit. Interacts with L10 and the large rRNA to form the base of the stalk. L10 forms an elongated spine to which L12 dimers bind in a sequential fashion forming a multimeric L10(L12)X complex. One or more lysine residues are methylated.

Forms part of the ribosomal stalk which helps the ribosome interact with GTP-bound translation factors. The chain is Large ribosomal subunit protein uL11 from Synechococcus sp. (strain RCC307).